We begin with the raw amino-acid sequence, 502 residues long: MKPFSQFFVFVVTVSATSYIDAFTRNDFPNDFLFGAATSAYQWEGAFDEDGKSPSVWDTTSHCDSGSNNGDIACDGYHKYKEDVMLMAEMGLESFRFSISWSRLIPNGRGRINPKGLLFYKNLIKELRSHGIEPQVTLYHYDLPQSLEDEYGGWINRKIIEDFTAFADVCFREFGEDVKLWTKINEATLFAIGSYGDGMRYGHCPPMNYSTANVCTETYIAGHNMLLAHSSASNLYKLKYKTKQRGSVGLSIYAYGLSPYTDSKDDETATERAEAFLFGWMLKPLVVGDYPDIMKRTLGSRLPVFSEEESKQVKGSSDFVGVVHYNTFYVTNRPAPSLVTSINKLFFADIGAYLIAAGNASLFEFDAVPWGLEGILQHIKQSYNNPPIYILENGKPMKHGSTLQDTPRAEFIQAYIGAVHNAITNGSDTRGYFVWSMIDLYELIGRYMTSYGMYYVNFSDPGRKRSPKLSASWYTGFLNGTIDVASQDTIQLQRKCSGSSSL.

An N-terminal signal peptide occupies residues 1–22; that stretch reads MKPFSQFFVFVVTVSATSYIDA. Residues Gln42, His140, and 185–186 each bind a beta-D-glucoside; that span reads NE. Catalysis depends on Glu186, which acts as the Proton donor. The N-linked (GlcNAc...) asparagine glycan is linked to Asn208. Tyr325 is an a beta-D-glucoside binding site. Residue Asn359 is glycosylated (N-linked (GlcNAc...) asparagine). Residue Glu392 participates in a beta-D-glucoside binding. Glu392 acts as the Nucleophile in catalysis. An N-linked (GlcNAc...) asparagine glycan is attached at Asn425. 2 residues coordinate a beta-D-glucoside: Trp435 and Tyr451. Residues Asn457 and Asn479 are each glycosylated (N-linked (GlcNAc...) asparagine).

The protein belongs to the glycosyl hydrolase 1 family.

The enzyme catalyses Hydrolysis of terminal, non-reducing beta-D-glucosyl residues with release of beta-D-glucose.. The protein is Beta-glucosidase 7 of Arabidopsis thaliana (Mouse-ear cress).